The chain runs to 850 residues: G-type lectin S-receptor-like serine/threonine-protein kinase CES101 (850 aa).

The signal sequence occupies residues 1 to 22 (MWSNCIFLTLFTFYLFLGQSCC). The Extracellular segment spans residues 23–423 (QTDTLLQGQY…IKGSKLAATW (401 aa)). Residues 24–144 (TDTLLQGQYL…DSDGSMKRTL (121 aa)) enclose the Bulb-type lectin domain. Residues asparagine 55, asparagine 118, asparagine 194, and asparagine 374 are each glycosylated (N-linked (GlcNAc...) asparagine). The region spanning 334–416 (CSRFGYTFRE…PRTIYIRIKG (83 aa)) is the PAN domain. 2 cysteine pairs are disulfide-bonded: cysteine 367–cysteine 390 and cysteine 371–cysteine 377. A helical membrane pass occupies residues 424–444 (LVVVASLFLIIPVTWLIIYLV). Residues 445 to 850 (LRKFKIKGTN…RVTITVMEAR (406 aa)) are Cytoplasmic-facing. Positions 527–816 (FSDANKLGEG…ALSLPKEPAF (290 aa)) constitute a Protein kinase domain. Residues 533–541 (LGEGGFGPV) and lysine 555 contribute to the ATP site. Serine 561 carries the post-translational modification Phosphoserine. The tract at residues 616 to 633 (LRKIVLDWKLRFRIMEGI) is caM-binding. The active-site Proton acceptor is aspartate 652. Serine 669 bears the Phosphoserine mark. A Phosphothreonine modification is found at threonine 686. 2 positions are modified to phosphoserine: serine 730 and serine 838. The residue at position 845 (threonine 845) is a Phosphothreonine.

This sequence belongs to the protein kinase superfamily. Ser/Thr protein kinase family. As to expression, mostly expressed in leaves, and, to a lower extent, in roots and flowers.

The protein resides in the cell membrane. It catalyses the reaction L-seryl-[protein] + ATP = O-phospho-L-seryl-[protein] + ADP + H(+). The catalysed reaction is L-threonyl-[protein] + ATP = O-phospho-L-threonyl-[protein] + ADP + H(+). In terms of biological role, promotes the expression of genes involved in photosynthesis at least in dedifferentiated calli. The sequence is that of G-type lectin S-receptor-like serine/threonine-protein kinase CES101 (CES101) from Arabidopsis thaliana (Mouse-ear cress).